The primary structure comprises 198 residues: Nucleoside triphosphate pyrophosphatase (198 aa).

Asp-74 serves as the catalytic Proton acceptor.

It belongs to the Maf family. The cofactor is a divalent metal cation.

The protein resides in the cytoplasm. The catalysed reaction is a ribonucleoside 5'-triphosphate + H2O = a ribonucleoside 5'-phosphate + diphosphate + H(+). The enzyme catalyses a 2'-deoxyribonucleoside 5'-triphosphate + H2O = a 2'-deoxyribonucleoside 5'-phosphate + diphosphate + H(+). Its function is as follows. Nucleoside triphosphate pyrophosphatase. May have a dual role in cell division arrest and in preventing the incorporation of modified nucleotides into cellular nucleic acids. This chain is Nucleoside triphosphate pyrophosphatase, found in Sphingopyxis alaskensis (strain DSM 13593 / LMG 18877 / RB2256) (Sphingomonas alaskensis).